A 426-amino-acid chain; its full sequence is Serine--tRNA ligase (426 aa).

Residues 36 to 66 (KRKHLQERTQDLQSQRNTISKEIGQKKAKGE) form a disordered region. Over residues 46–55 (DLQSQRNTIS) the composition is skewed to polar residues. 233–235 (TAE) serves as a coordination point for L-serine. 264–266 (RSE) is a binding site for ATP. Position 287 (glutamate 287) interacts with L-serine. Residue 351 to 354 (EISS) coordinates ATP. Residue serine 387 participates in L-serine binding.

This sequence belongs to the class-II aminoacyl-tRNA synthetase family. Type-1 seryl-tRNA synthetase subfamily. In terms of assembly, homodimer. The tRNA molecule binds across the dimer.

It localises to the cytoplasm. It carries out the reaction tRNA(Ser) + L-serine + ATP = L-seryl-tRNA(Ser) + AMP + diphosphate + H(+). The enzyme catalyses tRNA(Sec) + L-serine + ATP = L-seryl-tRNA(Sec) + AMP + diphosphate + H(+). It participates in aminoacyl-tRNA biosynthesis; selenocysteinyl-tRNA(Sec) biosynthesis; L-seryl-tRNA(Sec) from L-serine and tRNA(Sec): step 1/1. Its function is as follows. Catalyzes the attachment of serine to tRNA(Ser). Is also able to aminoacylate tRNA(Sec) with serine, to form the misacylated tRNA L-seryl-tRNA(Sec), which will be further converted into selenocysteinyl-tRNA(Sec). The sequence is that of Serine--tRNA ligase from Francisella tularensis subsp. tularensis (strain FSC 198).